Consider the following 259-residue polypeptide: Undecaprenyl-diphosphatase 4 (259 aa).

The next 8 membrane-spanning stretches (helical) occupy residues 1–21 (MNWL…FLPI), 39–59 (AGLF…FIYY), 71–91 (FSKL…IGLL), 99–119 (ISKT…FLYM), 133–153 (ITYK…FPAI), 174–194 (AYFS…LQFV), 208–228 (SLIV…SWMI), and 239–259 (FAYY…TDVF).

Belongs to the UppP family.

It localises to the cell membrane. It catalyses the reaction di-trans,octa-cis-undecaprenyl diphosphate + H2O = di-trans,octa-cis-undecaprenyl phosphate + phosphate + H(+). In terms of biological role, catalyzes the dephosphorylation of undecaprenyl diphosphate (UPP). Confers resistance to bacitracin. This chain is Undecaprenyl-diphosphatase 4, found in Bacillus cereus (strain ZK / E33L).